The following is a 242-amino-acid chain: DNA repair protein RecO (242 aa).

This sequence belongs to the RecO family. As to quaternary structure, monomer.

In terms of biological role, involved in DNA repair and RecF pathway recombination. The sequence is that of DNA repair protein RecO from Salmonella agona (strain SL483).